A 120-amino-acid polypeptide reads, in one-letter code: NAD(P)H-quinone oxidoreductase subunit 3, chloroplastic (120 aa).

The next 3 helical transmembrane spans lie at 9-29, 64-84, and 88-108; these read IFWA…LISA, MFAL…PWAM, and VLGV…IVGL.

This sequence belongs to the complex I subunit 3 family. As to quaternary structure, NDH is composed of at least 16 different subunits, 5 of which are encoded in the nucleus.

It is found in the plastid. It localises to the chloroplast thylakoid membrane. The catalysed reaction is a plastoquinone + NADH + (n+1) H(+)(in) = a plastoquinol + NAD(+) + n H(+)(out). It carries out the reaction a plastoquinone + NADPH + (n+1) H(+)(in) = a plastoquinol + NADP(+) + n H(+)(out). Its function is as follows. NDH shuttles electrons from NAD(P)H:plastoquinone, via FMN and iron-sulfur (Fe-S) centers, to quinones in the photosynthetic chain and possibly in a chloroplast respiratory chain. The immediate electron acceptor for the enzyme in this species is believed to be plastoquinone. Couples the redox reaction to proton translocation, and thus conserves the redox energy in a proton gradient. In Citrus sinensis (Sweet orange), this protein is NAD(P)H-quinone oxidoreductase subunit 3, chloroplastic.